An 881-amino-acid polypeptide reads, in one-letter code: Ent-kaurene synthase CPS/KS, chloroplastic (881 aa).

Residues 1–41 (MASSTLIQNRSCGVTSSMSSFQIFRGQPLRFPGTRTPAAVQ) constitute a chloroplast transit peptide. Residues Asp-417, Asp-419, Asp-635, Asp-639, Asn-778, Asp-779, and Glu-786 each contribute to the Mg(2+) site. The DXDDTA motif motif lies at 417–422 (DVDDTA). Positions 635 to 639 (DDYFD) match the DDXXD motif motif.

Belongs to the terpene synthase family. It depends on Mg(2+) as a cofactor.

It is found in the plastid. Its subcellular location is the chloroplast. It carries out the reaction (2E,6E,10E)-geranylgeranyl diphosphate = ent-copalyl diphosphate. It catalyses the reaction ent-copalyl diphosphate = ent-kaur-16-ene + diphosphate. The catalysed reaction is ent-copalyl diphosphate = ent-beyerene + diphosphate. The enzyme catalyses ent-copalyl diphosphate = ent-sandaracopimara-8(14),15-diene + diphosphate. It carries out the reaction ent-copalyl diphosphate = ent-isokaurene + diphosphate. It catalyses the reaction ent-copalyl diphosphate + H2O = 16alpha-hydroxy-ent-kaurene + diphosphate. It participates in secondary metabolite biosynthesis; terpenoid biosynthesis. In terms of biological role, bifunctional copalyl diphosphate/kaurene synthase involved in the biosynthesis of labdane-related diterpenoids (LRDs) natural products such as ent-beyerene, an antimicrobial compound. Supports the conversion of geranylgeranyl diphosphate (GGPP) to ent-copalyl diphosphate (ent-CDP). Also catalyzes the subsequent cyclization of ent-CDP into many diterpenes, including ent-kaur-16-ene as the major product, and ent-beyerene, ent-sandaracopimaradiene, ent-kaur-15-ene (ent-isokaurene) and 16-hydroxy-ent-kaurene (ent-16-alpha-hydroxy-kaurene) as minor products. This is Ent-kaurene synthase CPS/KS, chloroplastic from Physcomitrium patens (Spreading-leaved earth moss).